Here is a 183-residue protein sequence, read N- to C-terminus: Ribosome maturation factor RimM (183 aa).

The 80-residue stretch at 104–183 folds into the PRC barrel domain; sequence EGDYYWKDLI…TIEVDWDPGF (80 aa).

This sequence belongs to the RimM family. As to quaternary structure, binds ribosomal protein uS19.

Its subcellular location is the cytoplasm. In terms of biological role, an accessory protein needed during the final step in the assembly of 30S ribosomal subunit, possibly for assembly of the head region. Essential for efficient processing of 16S rRNA. May be needed both before and after RbfA during the maturation of 16S rRNA. It has affinity for free ribosomal 30S subunits but not for 70S ribosomes. In Cronobacter sakazakii (strain ATCC BAA-894) (Enterobacter sakazakii), this protein is Ribosome maturation factor RimM.